A 95-amino-acid polypeptide reads, in one-letter code: MNDLIDKLLAWRGSGKSGDQAKKRLKLILAHDRADLSPELLSMMRQEILEVVGRYLDIDTEETELLLESDQRTTALIANFPIRRIKRRPLTEKLP.

It belongs to the MinE family.

Functionally, prevents the cell division inhibition by proteins MinC and MinD at internal division sites while permitting inhibition at polar sites. This ensures cell division at the proper site by restricting the formation of a division septum at the midpoint of the long axis of the cell. The chain is Cell division topological specificity factor from Microcystis aeruginosa (strain NIES-843 / IAM M-2473).